A 314-amino-acid chain; its full sequence is Bifunctional riboflavin kinase/FMN adenylyltransferase (314 aa).

Belongs to the RibF family.

It carries out the reaction riboflavin + ATP = FMN + ADP + H(+). It catalyses the reaction FMN + ATP + H(+) = FAD + diphosphate. It functions in the pathway cofactor biosynthesis; FAD biosynthesis; FAD from FMN: step 1/1. The protein operates within cofactor biosynthesis; FMN biosynthesis; FMN from riboflavin (ATP route): step 1/1. In terms of biological role, catalyzes the phosphorylation of riboflavin to FMN followed by the adenylation of FMN to FAD. Can also catalyze the phosphorylation of the toxic riboflavin analogs 8-demethyl-8-aminoriboflavin (AF) to 8-demethyl-8-aminoriboflavin mononucleotide (AFMN) and roseoflavin (RoF) to roseoflavin mononucleotide (RoFMN), and the adenylation of AFMN to 8-demethyl-8-aminoriboflavin adenine dinucleotide (AFAD). This is Bifunctional riboflavin kinase/FMN adenylyltransferase from Listeria monocytogenes serovar 1/2a (strain ATCC BAA-679 / EGD-e).